We begin with the raw amino-acid sequence, 366 residues long: Flagellar P-ring protein (366 aa).

Residues 1-20 form the signal peptide; it reads MVIKFLSALILLLVTTAAQA.

This sequence belongs to the FlgI family. The basal body constitutes a major portion of the flagellar organelle and consists of four rings (L,P,S, and M) mounted on a central rod.

It localises to the periplasm. The protein localises to the bacterial flagellum basal body. Its function is as follows. Assembles around the rod to form the L-ring and probably protects the motor/basal body from shearing forces during rotation. The protein is Flagellar P-ring protein of Escherichia coli (strain UTI89 / UPEC).